Here is a 332-residue protein sequence, read N- to C-terminus: GTPase Obg (332 aa).

An Obg domain is found at 1–159; sequence MKFLDQAKIY…RWVWLRLKLI (159 aa). The region spanning 160–328 is the OBG-type G domain; the sequence is ADAGLVGLPN…VLRETLRMIR (169 aa). Residues 166–173, 191–195, 213–216, 280–283, and 309–311 contribute to the GTP site; these read GLPNAGKS, FTTLH, DIPG, NKMD, and SAA. Ser173 and Thr193 together coordinate Mg(2+).

Belongs to the TRAFAC class OBG-HflX-like GTPase superfamily. OBG GTPase family. As to quaternary structure, monomer. Mg(2+) is required as a cofactor.

It is found in the cytoplasm. In terms of biological role, an essential GTPase which binds GTP, GDP and possibly (p)ppGpp with moderate affinity, with high nucleotide exchange rates and a fairly low GTP hydrolysis rate. Plays a role in control of the cell cycle, stress response, ribosome biogenesis and in those bacteria that undergo differentiation, in morphogenesis control. The chain is GTPase Obg from Acidiphilium cryptum (strain JF-5).